The sequence spans 338 residues: Ketol-acid reductoisomerase (NADP(+)) (338 aa).

The region spanning 1–181 (MKVYYDKDCD…GGGRTGIIET (181 aa)) is the KARI N-terminal Rossmann domain. NADP(+) contacts are provided by residues 24-27 (YGSQ), R47, S50, T52, and 82-85 (DEFQ). H107 is an active-site residue. G133 lines the NADP(+) pocket. A KARI C-terminal knotted domain is found at 182–327 (TFKDETETDL…EQLRSMMPWI (146 aa)). Mg(2+) contacts are provided by D190, E194, E226, and E230. Residue S251 coordinates substrate.

Belongs to the ketol-acid reductoisomerase family. It depends on Mg(2+) as a cofactor.

The enzyme catalyses (2R)-2,3-dihydroxy-3-methylbutanoate + NADP(+) = (2S)-2-acetolactate + NADPH + H(+). It carries out the reaction (2R,3R)-2,3-dihydroxy-3-methylpentanoate + NADP(+) = (S)-2-ethyl-2-hydroxy-3-oxobutanoate + NADPH + H(+). The protein operates within amino-acid biosynthesis; L-isoleucine biosynthesis; L-isoleucine from 2-oxobutanoate: step 2/4. It functions in the pathway amino-acid biosynthesis; L-valine biosynthesis; L-valine from pyruvate: step 2/4. In terms of biological role, involved in the biosynthesis of branched-chain amino acids (BCAA). Catalyzes an alkyl-migration followed by a ketol-acid reduction of (S)-2-acetolactate (S2AL) to yield (R)-2,3-dihydroxy-isovalerate. In the isomerase reaction, S2AL is rearranged via a Mg-dependent methyl migration to produce 3-hydroxy-3-methyl-2-ketobutyrate (HMKB). In the reductase reaction, this 2-ketoacid undergoes a metal-dependent reduction by NADPH to yield (R)-2,3-dihydroxy-isovalerate. In Pseudomonas fluorescens (strain SBW25), this protein is Ketol-acid reductoisomerase (NADP(+)).